Reading from the N-terminus, the 693-residue chain is Glycine--tRNA ligase beta subunit (693 aa).

Belongs to the class-II aminoacyl-tRNA synthetase family. In terms of assembly, tetramer of two alpha and two beta subunits.

The protein localises to the cytoplasm. It carries out the reaction tRNA(Gly) + glycine + ATP = glycyl-tRNA(Gly) + AMP + diphosphate. The polypeptide is Glycine--tRNA ligase beta subunit (glyS) (Halalkalibacterium halodurans (strain ATCC BAA-125 / DSM 18197 / FERM 7344 / JCM 9153 / C-125) (Bacillus halodurans)).